The primary structure comprises 125 residues: Cytochrome c2 (125 aa).

Positions 1–21 (MKAIKIAMVGAALVWSASAYA) are cleaved as a signal peptide. In terms of domain architecture, Cytochrome c spans 23–123 (GDPVKGEQVF…DVIAFLATQH (101 aa)). Heme c-binding residues include Cys35, Cys38, His39, and Met101.

Belongs to the cytochrome c family. In terms of processing, binds 1 heme c group covalently per subunit.

In terms of biological role, cytochrome c2 is found mainly in purple, non-sulfur, photosynthetic bacteria where it functions as the electron donor to the oxidized bacteriochlorophyll in the photophosphorylation pathway. However, it may also have a role in the respiratory chain and is found in some non-photosynthetic bacteria. The polypeptide is Cytochrome c2 (Rhodomicrobium vannielii (strain ATCC 17100 / DSM 162 / LMG 4299 / NCIMB 10020 / ATH 3.1.1)).